We begin with the raw amino-acid sequence, 828 residues long: MATSENCRNAAGAGKVDAEKALYTELWRACAGPLVTVPCEGELVFYFPQGHIEQVEASTNQASDQQMPVYNLPSKILCRVINVLLKAEPDTDEVYAQVTLLPEPNQDENVVSKEPMPSPPPRFHVHSFCKTLTASDTSTHGGFSVLRRHADECLPPLDMSRQPPTQELVAKDLHANEWRFRHIFRGQPRRHLLQSGWSVFVSSKRLVAGDAFIFLRGENGELRVGVRRAMRQQGNAPSSVISSHSMHLGVLATAWHAIQTKTLFTVYYKPRTSPADFIVPYDQYMESLKNNYSIGMRFKMRFEGEEAPEQRFTGTIVGIENADLKRWPESKWRCLKVRWDETSAIPRPDRVSPWKVEPALSPPALNPLPIPRQKRPRSNVLPSSPDSSVLTREGSSKVVVDTSQASGFSRVLQGQEISTLRGNFVENNESDSSEKPPIWQPLLDDEKADVHSASRKCISDKRLPLGRPESSFTDLLSGFGGQSSSSHGFHSPTGGQTAPASWVKRQALDKETDFSLLAKQWSLVSSGLSLNLMESGLKGADTLYQMRGTSRLNCFNEYPTFPGHRPDNQQGNWLMPPSVLPYIQMSAHSGEIMPKPMASPQPEAMKPKEGNCKLFGIPLVSKCATIDPVMLRKNSPIHSTSNMHFGIHPHQFPIIESDQRSEQSKGSKLPDDGFIVHDQEEQFQTSHPGTRDREGKGLVHSTRSCTKVHKQGTALGRSVDLAKFNNYEELIAELDHIFDFNGELKARNKNWLVVYTDDEGDMMLVGDDPWEFCGMVRKIFIYTKDEVQRMNPGTLNSKGEDNSSVAEGSDAKEVKNLQLHIDSSPEDS.

Positions 128–230 (FCKTLTASDT…ELRVGVRRAM (103 aa)) form a DNA-binding region, TF-B3. Disordered regions lie at residues 348–397 (PDRV…GSSK), 681–703 (EQFQ…HSTR), and 791–828 (NPGT…PEDS). A compositionally biased stretch (pro residues) spans 360-370 (LSPPALNPLPI). The span at 380-390 (VLPSSPDSSVL) shows a compositional bias: polar residues. One can recognise a PB1 domain in the interval 703-786 (RSCTKVHKQG…RKIFIYTKDE (84 aa)). Residues 791-806 (NPGTLNSKGEDNSSVA) are compositionally biased toward polar residues.

The protein belongs to the ARF family. Homodimers and heterodimers. Expressed in root, leaf and stem. Also expressed in flower and fruit. Expressed in flower buds about three days before opening including stamen, petal and sepal with the highest in ovary.

The protein localises to the nucleus. Functionally, auxin response factors (ARFs) are transcriptional factors that binds specifically to the DNA sequence 5'-TGTCTC-3' found in the auxin-responsive promoter elements (AuxREs). Could act as transcriptional activator or repressor. Involved in the control of fruit ripening process. Regulates expression of a number of ripening regulators, transcription factors, and ethylene biosynthesis and signaling components. May act as a transcriptional repressor of auxin-responsive genes. In Solanum lycopersicum (Tomato), this protein is Auxin response factor 2B.